The following is a 328-amino-acid chain: Nickel import system permease protein NikB (328 aa).

Helical transmembrane passes span 11–31, 104–124, 139–159, 170–190, 229–249, and 279–299; these read LIQM…LMKL, LLIS…LGII, VIST…LLFI, ILSQ…AYII, ILPI…GTVV, and VLFI…LTLL. One can recognise an ABC transmembrane type-1 domain in the interval 100-297; that stretch reads APITLLISFS…IINTIADLLT (198 aa).

It belongs to the binding-protein-dependent transport system permease family. OppBC subfamily. As to quaternary structure, the complex is composed of two ATP-binding proteins (NikD and NikE), two transmembrane proteins (NikB and NikC) and a solute-binding protein (NikA).

It localises to the cell membrane. Functionally, part of the ABC transporter complex NikABCDE (Opp2) involved in nickel import. Probably responsible for the translocation of the substrate across the membrane. The protein is Nickel import system permease protein NikB of Staphylococcus aureus (strain MRSA252).